Here is a 563-residue protein sequence, read N- to C-terminus: Arginine--tRNA ligase (563 aa).

The short motif at 108-118 (PNVAKEMHVGH) is the 'HIGH' region element.

This sequence belongs to the class-I aminoacyl-tRNA synthetase family. Monomer.

The protein resides in the cytoplasm. It catalyses the reaction tRNA(Arg) + L-arginine + ATP = L-arginyl-tRNA(Arg) + AMP + diphosphate. The polypeptide is Arginine--tRNA ligase (argS) (Pasteurella multocida (strain Pm70)).